Here is a 421-residue protein sequence, read N- to C-terminus: uncharacterized protein (421 aa).

Lysine 249 is modified (N6-(pyridoxal phosphate)lysine).

Belongs to the class-I pyridoxal-phosphate-dependent aminotransferase family. It depends on pyridoxal 5'-phosphate as a cofactor.

The protein resides in the cytoplasm. This is an uncharacterized protein from Schizosaccharomyces pombe (strain 972 / ATCC 24843) (Fission yeast).